The primary structure comprises 112 residues: Small ribosomal subunit protein bS6 (112 aa).

Belongs to the bacterial ribosomal protein bS6 family.

Binds together with bS18 to 16S ribosomal RNA. The sequence is that of Small ribosomal subunit protein bS6 from Chlamydia trachomatis serovar L2 (strain ATCC VR-902B / DSM 19102 / 434/Bu).